A 410-amino-acid polypeptide reads, in one-letter code: Putative transporter AmpG 1 (410 aa).

The next 12 membrane-spanning stretches (helical) occupy residues 5-25 (LSII…TGNT), 40-60 (IGLL…APIF), 76-96 (LSWI…LSFL), 98-118 (PFDN…FSSM), 141-161 (GIYI…AIYL), 169-189 (EIYK…IVGV), 217-237 (ILKP…LILY), 265-285 (VGKF…GFIM), 290-310 (ILDS…LFII), 320-340 (LLFI…TAYI), 356-378 (YSFF…GYIV), and 383-402 (WQNF…LVLL).

This sequence belongs to the major facilitator superfamily.

It localises to the cell inner membrane. The sequence is that of Putative transporter AmpG 1 (ampG1) from Rickettsia bellii (strain RML369-C).